The sequence spans 428 residues: Tryptophan synthase beta chain (428 aa).

N6-(pyridoxal phosphate)lysine is present on Lys-92.

The protein belongs to the TrpB family. As to quaternary structure, tetramer of two alpha and two beta chains. It depends on pyridoxal 5'-phosphate as a cofactor.

It catalyses the reaction (1S,2R)-1-C-(indol-3-yl)glycerol 3-phosphate + L-serine = D-glyceraldehyde 3-phosphate + L-tryptophan + H2O. Its pathway is amino-acid biosynthesis; L-tryptophan biosynthesis; L-tryptophan from chorismate: step 5/5. Functionally, the beta subunit is responsible for the synthesis of L-tryptophan from indole and L-serine. This is Tryptophan synthase beta chain from Leptothrix cholodnii (strain ATCC 51168 / LMG 8142 / SP-6) (Leptothrix discophora (strain SP-6)).